A 208-amino-acid chain; its full sequence is Peroxiredoxin (208 aa).

The Thioredoxin domain occupies 2 to 156 (PLLGDDFPQL…IVRAVKALQT (155 aa)). The active-site Cysteine sulfenic acid (-SOH) intermediate is the C44. R119 is a substrate binding site.

This sequence belongs to the peroxiredoxin family. Prx6 subfamily. Homodecamer. Pentamer of dimers that assemble into a ring structure.

It is found in the cytoplasm. The catalysed reaction is a hydroperoxide + [thioredoxin]-dithiol = an alcohol + [thioredoxin]-disulfide + H2O. In terms of biological role, thiol-specific peroxidase that catalyzes the reduction of hydrogen peroxide and organic hydroperoxides to water and alcohols, respectively. Plays a role in cell protection against oxidative stress by detoxifying peroxides. This Treponema denticola (strain ATCC 35405 / DSM 14222 / CIP 103919 / JCM 8153 / KCTC 15104) protein is Peroxiredoxin.